Consider the following 692-residue polypeptide: Vitamin B12-dependent ribonucleoside-diphosphate reductase (692 aa).

An ATP-cone domain is found at 7 to 95 (AKVRRRDGTL…IYRQRRAELR (89 aa)). Residues Ser177, 192-193 (GC), Gly221, 375-379 (NPCGE), and 520-524 (PTGTI) contribute to the substrate site. A disulfide bond links Cys193 and Cys388. Asn375 (proton acceptor) is an active-site residue. The active-site Cysteine radical intermediate is Cys377. Catalysis depends on Glu379, which acts as the Proton acceptor.

It belongs to the ribonucleoside diphosphate reductase class-2 family. The cofactor is adenosylcob(III)alamin.

It carries out the reaction a 2'-deoxyribonucleoside 5'-diphosphate + [thioredoxin]-disulfide + H2O = a ribonucleoside 5'-diphosphate + [thioredoxin]-dithiol. Provides the precursors necessary for DNA synthesis. Catalyzes the biosynthesis of deoxyribonucleotides from the corresponding ribonucleotides. This is Vitamin B12-dependent ribonucleoside-diphosphate reductase (nrdZ) from Mycobacterium tuberculosis (strain CDC 1551 / Oshkosh).